We begin with the raw amino-acid sequence, 121 residues long: Small ribosomal subunit protein uS13 (121 aa).

Residues 91 to 121 (HRKGLPMRGQRTRTNARTRKGPRKAGVALKK) are disordered.

It belongs to the universal ribosomal protein uS13 family. As to quaternary structure, part of the 30S ribosomal subunit. Forms a loose heterodimer with protein S19. Forms two bridges to the 50S subunit in the 70S ribosome.

Its function is as follows. Located at the top of the head of the 30S subunit, it contacts several helices of the 16S rRNA. In the 70S ribosome it contacts the 23S rRNA (bridge B1a) and protein L5 of the 50S subunit (bridge B1b), connecting the 2 subunits; these bridges are implicated in subunit movement. Contacts the tRNAs in the A and P-sites. The polypeptide is Small ribosomal subunit protein uS13 (Cupriavidus necator (strain ATCC 17699 / DSM 428 / KCTC 22496 / NCIMB 10442 / H16 / Stanier 337) (Ralstonia eutropha)).